The sequence spans 616 residues: Chaperone protein HscA (616 aa).

Belongs to the heat shock protein 70 family.

Its function is as follows. Chaperone involved in the maturation of iron-sulfur cluster-containing proteins. Has a low intrinsic ATPase activity which is markedly stimulated by HscB. Involved in the maturation of IscU. In Photorhabdus laumondii subsp. laumondii (strain DSM 15139 / CIP 105565 / TT01) (Photorhabdus luminescens subsp. laumondii), this protein is Chaperone protein HscA.